The chain runs to 1744 residues: Complement C4-B (1744 aa).

An N-terminal signal peptide occupies residues 1–19 (MRLLWGLIWASSFFTLSLQ). Residues Cys68 and Cys97 are joined by a disulfide bond. Asn226 is a glycosylation site (N-linked (GlcNAc...) asparagine). The cysteines at positions 635 and 669 are disulfide-linked. Residues 676–679 (RKKR) constitute a propeptide that is removed on maturation. Cystine bridges form between Cys702-Cys728, Cys703-Cys735, and Cys716-Cys736. The Anaphylatoxin-like domain occupies 702–736 (CCQDGVTRLPMMRSCEQRAARVQQPDCREPFLSCC). Asn862 carries an N-linked (GlcNAc...) asparagine glycan. A Phosphoserine modification is found at Ser918. Positions 1010–1013 (CGEQ) form a cross-link, isoglutamyl cysteine thioester (Cys-Gln). N-linked (GlcNAc...) asparagine glycosylation is found at Asn1328 and Asn1391. Tyr1417, Tyr1420, and Tyr1422 each carry sulfotyrosine. Residues 1447–1453 (RRNRRRR) constitute a propeptide that is removed on maturation. Intrachain disulfides connect Cys1471–Cys1535, Cys1583–Cys1588, Cys1595–Cys1673, Cys1618–Cys1742, and Cys1718–Cys1727. The NTR domain maps to 1595–1742 (CPRQRRALER…FLQEYGTQGC (148 aa)).

In absence of complement activation, circulates in blood as a disulfide-linked trimer of an alpha, beta and gamma chain. As to quaternary structure, complement C4b is composed of complement C4b-A, complement C4 beta and complement C4 gamma chains that are associated via disulfide bonds. Non-enzymatic component of the C3 convertase, also named C4bC2b, composed of the serine protease complement C2b (C2), as well as complement C4b. Non-enzymatic component of the C5 convertase, also named C4bC2bC3b, composed of the serine protease complement C2b (C2), complement C3b, as well as complement C4b. Interacts with CR1 (via Sushi 1 and Sushi 2 domains). In terms of assembly, (Microbial infection) Binds B.burgdorferi OspC, the interaction is inhibited by complement factor C2. This binding may inhibit the complement cascade and allow the bacteria to survive in the host bloodstream. Prior to secretion, the single-chain precursor is enzymatically cleaved by plasminogen (PLG) to yield non-identical chains alpha, beta and gamma. During activation of the complement systems, the alpha chain is cleaved into C4a and C4b by different proteases depending on the complement pathway: C4b stays linked to the beta and gamma chains, while C4a is released in the plasma. The alpha chain is cleaved by C1S to generate C4a and C4b following activation by the classical complement system. The alpha chain is cleaved to generate C4a and C4b by MASP2 following activation by the lectin complement system. The alpha chain is cleaved by GZMK to generate C4a and C4b following activation by the GZMK complement system. Further degradation of C4b by C1 into the inactive fragments C4c and C4d blocks the generation of C3 convertase. The proteolytic cleavages often are incomplete so that many structural forms can be found in plasma. In terms of processing, upon activation, the internal thioester bond reacts with carbohydrate antigens on the target surface to form amide or ester bonds, leading to covalent association with the surface of pathogens. Post-translationally, complement C4b interacts with complement C3b via a thioester linkage. N- and O-glycosylated. O-glycosylated with a core 1 or possibly core 8 glycan. In terms of tissue distribution, complement component C4 is expressed at highest levels in the liver, at moderate levels in the adrenal cortex, adrenal medulla, thyroid gland, and the kidney, and at lowest levels in the heart, ovary, small intestine, thymus, pancreas and spleen. The extra-hepatic sites of expression may be important for the local protection and inflammatory response.

It is found in the secreted. The protein resides in the synapse. It localises to the cell projection. The protein localises to the axon. Its subcellular location is the dendrite. It is found in the cell surface. Precursor of non-enzymatic components of the classical, lectin and GZMK complement pathways, which consist in a cascade of proteins that leads to phagocytosis and breakdown of pathogens and signaling that strengthens the adaptive immune system. Its function is as follows. Non-enzymatic component of C3 and C5 convertases. Generated following cleavage by complement proteases (C1S, MASP2 or GZMK, depending on the complement pathway), it covalently attaches to the surface of pathogens, where it acts as an opsonin that marks the surface of antigens for removal. It then recruits the serine protease complement C2b to form the C3 and C5 convertases, which cleave and activate C3 and C5, respectively, the next components of the complement pathways. Complement C4b-B isotype catalyzes the transacylation of the thioester carbonyl group to form ester bonds with carbohydrate antigens, while C4b-A isotype is responsible for effective binding to form amide bonds with immune aggregates or protein antigens. Functionally, putative humoral mediator released following cleavage by complement proteases (C1S, MASP2 or GZMK, depending on the complement pathway). While it is strongly similar to anaphylatoxins, its role is unclear. Was reported to act as a mediator of local inflammatory process; however these effects were probably due to contamination with C3a and/C5a anaphylatoxins in biological assays. The sequence is that of Complement C4-B from Homo sapiens (Human).